Consider the following 423-residue polypeptide: MDRAIEIDFRTISVVGLGYIGLPTATVLASRQRELIGVDINQHAVDTINQARIHIVEPDLDMLVRAAVSQGYLRATTEPEPADAFLIAVPTPFLEDKQPDLTYIEAAAKAIAPVLKRGDLVVLESTSPVGATEQLSAWLSEQRSDLSFPHQLGEESDIRVAHCPERVLPGHVLRELVENDRIIGGMTPRCSQAAQRLYELFVRGRCIVTDARTAEMCKLTENAFRDVNIAFANELSMICDEIGVNVWELISVANRHPRVNILQPGPGVGGHCIAVDPWFIVDAAPESARLIRTAREVNDAKPHYVLDRVKQAARRFKEPVIACFGLSFKANIDDLRESPAIEIVRTMVQQQLGTVLVVEPHIKVLPASLEGVELLNAEPALSRADIVVLLVDHQKFRKLDTDRLQSRVVIDTRGMWSAKRLAA.

11–28 (TISVVGLGYIGLPTATVL) lines the NAD(+) pocket. The active-site Proton donor/acceptor is Lys218. The active-site Nucleophile is Cys272.

The protein belongs to the UDP-glucose/GDP-mannose dehydrogenase family.

In terms of biological role, probably involved in synthesis of sugar components of EPS I, by converting NDP-N-acetyl-D-galactosamine into NDP-N-acetyl-D-galactosaminuronic acid. The chain is NDP-N-acetyl-D-galactosaminuronic acid dehydrogenase (epsD) from Ralstonia solanacearum (Pseudomonas solanacearum).